The sequence spans 1575 residues: Ras GTPase-activating-like protein IQGAP2 (1575 aa).

Serine 16 bears the Phosphoserine mark. A Calponin-homology (CH) domain is found at 41–156; that stretch reads LCHLEEAKRW…YCIHALSLYL (116 aa). Position 356 is a phosphothreonine (threonine 356). In terms of domain architecture, WW spans 594 to 627; that stretch reads ESSEGSWVTLNVQEKYNYYYNTDSKEGSWVPPEL. Phosphoserine is present on residues serine 595 and serine 599. 3 consecutive IQ domains span residues 690–719, 720–749, and 750–779; these read QTES…VFAG, NVDS…YFED, and HKNE…SENP. 4 positions are modified to phosphothreonine: threonine 782, threonine 881, threonine 1002, and threonine 1269. Residues 933-1182 enclose the Ras-GAP domain; it reads YLLLKLFKTA…QEFRKYFQEA (250 aa). Phosphoserine occurs at positions 1279 and 1461.

Functionally, binds to activated CDC42 and RAC1 but does not seem to stimulate their GTPase activity. Associates with calmodulin. This Mus musculus (Mouse) protein is Ras GTPase-activating-like protein IQGAP2 (Iqgap2).